The following is a 460-amino-acid chain: Ecdysteroid UDP-glucosyltransferase (460 aa).

The signal sequence occupies residues 1–18 (MFISILLLALAVERILCA).

The protein belongs to the UDP-glycosyltransferase family.

In terms of biological role, catalyzes the transfer of glucose from UDP-glucose to ecdysteroids which are insect molting hormones. Expression of egt interferes with normal insect development and block molting. This is Ecdysteroid UDP-glucosyltransferase (EGT) from Lacanobia oleracea granulosis virus (LoGV).